The following is a 564-amino-acid chain: Bifunctional sesquiterpene synthase 1 (564 aa).

Mg(2+)-binding residues include aspartate 317, aspartate 321, aspartate 461, and glutamate 469. The DDXXD motif motif lies at aspartate 317–aspartate 321.

Belongs to the terpene synthase family. Mg(2+) serves as cofactor.

The catalysed reaction is (2E,6E)-farnesyl diphosphate = alpha-copaene + diphosphate. It catalyses the reaction (2E,6E)-farnesyl diphosphate = delta-cadinene + diphosphate. It participates in secondary metabolite biosynthesis; terpenoid biosynthesis. In terms of biological role, sesquiterpene synthase converting farnesyl diphosphate to alpha copaene and delta-cadinene as the major products. This chain is Bifunctional sesquiterpene synthase 1, found in Phyla dulcis (Aztec sweet herb).